Consider the following 110-residue polypeptide: UPF0060 membrane protein Pnap_4944 (110 aa).

4 helical membrane passes run 8–28, 33–53, 65–85, and 88–108; these read ILFAVTALAEIVGCYLPWLVL, SLLLLVPAAMSLGLFAWLLTL, YGGMYIAVALGWLRFVDGIAL, and WDLSGAAIALVGMAVIVMQPS.

The protein belongs to the UPF0060 family.

The protein resides in the cell inner membrane. The protein is UPF0060 membrane protein Pnap_4944 of Polaromonas naphthalenivorans (strain CJ2).